We begin with the raw amino-acid sequence, 81 residues long: Sulfur carrier protein TusA (81 aa).

The active-site Cysteine persulfide intermediate is the cysteine 19.

This sequence belongs to the sulfur carrier protein TusA family.

The protein localises to the cytoplasm. Sulfur carrier protein which probably makes part of a sulfur-relay system. The sequence is that of Sulfur carrier protein TusA from Shewanella putrefaciens (strain CN-32 / ATCC BAA-453).